A 108-amino-acid chain; its full sequence is UPF0235 protein Rpal_0418 (108 aa).

It belongs to the UPF0235 family.

The polypeptide is UPF0235 protein Rpal_0418 (Rhodopseudomonas palustris (strain TIE-1)).